The primary structure comprises 689 residues: Glycine--tRNA ligase beta subunit (689 aa).

It belongs to the class-II aminoacyl-tRNA synthetase family. In terms of assembly, tetramer of two alpha and two beta subunits.

The protein localises to the cytoplasm. It catalyses the reaction tRNA(Gly) + glycine + ATP = glycyl-tRNA(Gly) + AMP + diphosphate. This chain is Glycine--tRNA ligase beta subunit, found in Sodalis glossinidius (strain morsitans).